A 209-amino-acid chain; its full sequence is Orotate phosphoribosyltransferase (209 aa).

5-phospho-alpha-D-ribose 1-diphosphate-binding positions include R96, K100, H102, and 122-130; that span reads EDLISTGGS. An orotate-binding site is contributed by S126.

This sequence belongs to the purine/pyrimidine phosphoribosyltransferase family. PyrE subfamily. In terms of assembly, homodimer. The cofactor is Mg(2+).

It carries out the reaction orotidine 5'-phosphate + diphosphate = orotate + 5-phospho-alpha-D-ribose 1-diphosphate. It functions in the pathway pyrimidine metabolism; UMP biosynthesis via de novo pathway; UMP from orotate: step 1/2. In terms of biological role, catalyzes the transfer of a ribosyl phosphate group from 5-phosphoribose 1-diphosphate to orotate, leading to the formation of orotidine monophosphate (OMP). The polypeptide is Orotate phosphoribosyltransferase (Lactococcus lactis subsp. cremoris (strain SK11)).